The sequence spans 41 residues: Large ribosomal subunit protein bL36 (41 aa).

This sequence belongs to the bacterial ribosomal protein bL36 family.

The chain is Large ribosomal subunit protein bL36 from Chelativorans sp. (strain BNC1).